Consider the following 191-residue polypeptide: uncharacterized protein (191 aa).

The next 5 helical transmembrane spans lie at 24–44 (IVRG…GASG), 51–71 (IIAA…LGAF), 114–134 (LIDG…FFLF), 139–159 (ALYV…VFIG), and 167–187 (IISG…CFMI).

It localises to the cell membrane. This is an uncharacterized protein from Methanocaldococcus jannaschii (strain ATCC 43067 / DSM 2661 / JAL-1 / JCM 10045 / NBRC 100440) (Methanococcus jannaschii).